We begin with the raw amino-acid sequence, 180 residues long: Translation initiation factor IF-3 (180 aa).

The protein belongs to the IF-3 family. As to quaternary structure, monomer.

Its subcellular location is the cytoplasm. IF-3 binds to the 30S ribosomal subunit and shifts the equilibrium between 70S ribosomes and their 50S and 30S subunits in favor of the free subunits, thus enhancing the availability of 30S subunits on which protein synthesis initiation begins. This is Translation initiation factor IF-3 from Escherichia coli (strain K12 / MC4100 / BW2952).